Reading from the N-terminus, the 200-residue chain is Recombination protein RecR (200 aa).

The segment at 58-73 (CSICGNITEDDPCPIC) adopts a C4-type zinc-finger fold. One can recognise a Toprim domain in the interval 81-177 (SQILVVEQSQ…KVTRLAHGLS (97 aa)).

It belongs to the RecR family.

Functionally, may play a role in DNA repair. It seems to be involved in an RecBC-independent recombinational process of DNA repair. It may act with RecF and RecO. The polypeptide is Recombination protein RecR (Limosilactobacillus reuteri (strain DSM 20016) (Lactobacillus reuteri)).